The following is a 969-amino-acid chain: Translation initiation factor IF-2 (969 aa).

The interval 96–377 is disordered; that stretch reads KRDPAEPVRA…NSRNQHQDRR (282 aa). Low complexity-rich tracts occupy residues 105–157, 167–181, and 216–252; these read AEPA…QAEP, AAPA…EPAK, and PSAP…PAAP. Residues 253 to 264 show a composition bias toward basic and acidic residues; the sequence is DRAREEARRAAE. Residues 357 to 366 show a composition bias toward gly residues; it reads RAGGKGGRGG. Positions 470–637 constitute a tr-type G domain; that stretch reads PRAPVVTVMG…NVLLQAEILE (168 aa). The interval 479–486 is G1; it reads GHVDHGKT. Position 479-486 (479-486) interacts with GTP; that stretch reads GHVDHGKT. The G2 stretch occupies residues 504 to 508; sequence GITQH. The interval 525 to 528 is G3; it reads DTPG. GTP is bound by residues 525-529 and 579-582; these read DTPGH and NKID. A G4 region spans residues 579–582; that stretch reads NKID. The tract at residues 615–617 is G5; that stretch reads SAK.

Belongs to the TRAFAC class translation factor GTPase superfamily. Classic translation factor GTPase family. IF-2 subfamily.

It is found in the cytoplasm. Its function is as follows. One of the essential components for the initiation of protein synthesis. Protects formylmethionyl-tRNA from spontaneous hydrolysis and promotes its binding to the 30S ribosomal subunits. Also involved in the hydrolysis of GTP during the formation of the 70S ribosomal complex. The protein is Translation initiation factor IF-2 of Bordetella parapertussis (strain 12822 / ATCC BAA-587 / NCTC 13253).